The sequence spans 428 residues: Phosphomethylpyrimidine synthase 1 (428 aa).

Residues asparagine 65, methionine 94, tyrosine 123, histidine 158, 180 to 182 (SRG), 221 to 224 (DGMR), and glutamate 260 each bind substrate. Histidine 264 contacts Zn(2+). Position 287 (tyrosine 287) interacts with substrate. Histidine 328 is a binding site for Zn(2+). 3 residues coordinate [4Fe-4S] cluster: cysteine 405, cysteine 408, and cysteine 412.

Belongs to the ThiC family. [4Fe-4S] cluster serves as cofactor.

It carries out the reaction 5-amino-1-(5-phospho-beta-D-ribosyl)imidazole + S-adenosyl-L-methionine = 4-amino-2-methyl-5-(phosphooxymethyl)pyrimidine + CO + 5'-deoxyadenosine + formate + L-methionine + 3 H(+). The protein operates within cofactor biosynthesis; thiamine diphosphate biosynthesis. Its function is as follows. Catalyzes the synthesis of the hydroxymethylpyrimidine phosphate (HMP-P) moiety of thiamine from aminoimidazole ribotide (AIR) in a radical S-adenosyl-L-methionine (SAM)-dependent reaction. The polypeptide is Phosphomethylpyrimidine synthase 1 (Methanosarcina mazei (strain ATCC BAA-159 / DSM 3647 / Goe1 / Go1 / JCM 11833 / OCM 88) (Methanosarcina frisia)).